A 256-amino-acid polypeptide reads, in one-letter code: MNRINQKLQEDHKLLSIYFTAGYPDFEDTEKIIVDLEKSGVDFIEIGLPFSDPLADGPTIQKSSTKALKNGMTTSKLFEQLKGIRNKVEIPLIIMGYFNPILQYGVEDFCKKCQETGIDGLIIPDLPVDVYHEKYQELFEQYGLRNIFLITPQTSDERIHFIDSVSNGFIYMVSSASVTGSTSGFGEDTRAYFKRVNDLQLKNPQIVGFGIKDNETFNQATEYAKGAIIGSAFIKHINENGTSNVGSFVKKVKALT.

Catalysis depends on proton acceptor residues glutamate 45 and aspartate 56.

This sequence belongs to the TrpA family. As to quaternary structure, tetramer of two alpha and two beta chains.

It catalyses the reaction (1S,2R)-1-C-(indol-3-yl)glycerol 3-phosphate + L-serine = D-glyceraldehyde 3-phosphate + L-tryptophan + H2O. Its pathway is amino-acid biosynthesis; L-tryptophan biosynthesis; L-tryptophan from chorismate: step 5/5. In terms of biological role, the alpha subunit is responsible for the aldol cleavage of indoleglycerol phosphate to indole and glyceraldehyde 3-phosphate. The polypeptide is Tryptophan synthase alpha chain (Christiangramia forsetii (strain DSM 17595 / CGMCC 1.15422 / KT0803) (Gramella forsetii)).